We begin with the raw amino-acid sequence, 551 residues long: Arginine--tRNA ligase (551 aa).

Residues 125–135 (ANPTGPLHIGH) carry the 'HIGH' region motif.

The protein belongs to the class-I aminoacyl-tRNA synthetase family. In terms of assembly, monomer.

Its subcellular location is the cytoplasm. It carries out the reaction tRNA(Arg) + L-arginine + ATP = L-arginyl-tRNA(Arg) + AMP + diphosphate. The chain is Arginine--tRNA ligase from Nitratidesulfovibrio vulgaris (strain DSM 19637 / Miyazaki F) (Desulfovibrio vulgaris).